Here is a 56-residue protein sequence, read N- to C-terminus: Large ribosomal subunit protein bL33 (56 aa).

Belongs to the bacterial ribosomal protein bL33 family.

The chain is Large ribosomal subunit protein bL33 from Treponema denticola (strain ATCC 35405 / DSM 14222 / CIP 103919 / JCM 8153 / KCTC 15104).